The sequence spans 652 residues: Vitrin (652 aa).

Positions Met-1–Ser-26 are cleaved as a signal peptide. Residues Thr-40 to Phe-133 enclose the LCCL domain. Intrachain disulfides connect Cys-46/Cys-62 and Cys-66/Cys-86. Disordered regions lie at residues Glu-137–Pro-181 and Thr-196–Leu-231. Over residues Thr-145–Pro-158 the composition is skewed to low complexity. Residues Thr-196–Ser-212 show a composition bias toward polar residues. 2 consecutive VWFA domains span residues Asp-267 to Val-452 and Asp-469 to Val-638. An N-linked (GlcNAc...) asparagine glycan is attached at Asn-494.

In terms of assembly, binds dermatan sulfate and chondroitin sulfate.

The protein localises to the secreted. Its subcellular location is the extracellular space. It localises to the extracellular matrix. Functionally, promotes matrix assembly and cell adhesiveness. Plays a role in spinal cord formation by regulating the proliferation and differentiation of neural stem cells. The polypeptide is Vitrin (VIT) (Bos taurus (Bovine)).